The sequence spans 730 residues: Rap1 GTPase-activating protein 2 (730 aa).

The Rap-GAP domain occupies 247-463 (IVAYDEHEVN…RTRAALLDNL (217 aa)). Disordered stretches follow at residues 510-668 (MVGS…STAS) and 698-730 (SRSP…STSH). Polar residues-rich tracts occupy residues 535 to 557 (GEVT…QSRS) and 597 to 612 (HSSQ…NPSS). Over residues 617 to 630 (PNKDRPFVKLKENG) the composition is skewed to basic and acidic residues. Residues 631–651 (RSNISRSSSSTSSFSSTAGES) show a composition bias toward low complexity. The span at 699–712 (RSPTDIKNRNSPRS) shows a compositional bias: polar residues.

It is found in the cytoplasm. GTPase activator for the nuclear Ras-related regulatory protein RAP-1A (KREV-1), converting it to the putatively inactive GDP-bound state. This chain is Rap1 GTPase-activating protein 2 (RAP1GAP2), found in Gallus gallus (Chicken).